The primary structure comprises 243 residues: MNLVIDGGNTFIKTAVFQNNRLLEKQVFLKKDFFENFENLQKKFPAIRKSILSSVTSLDSDLENALKKSYSLLQLDDLVALPFKNEYATPHTLGKDRIALVAAAVNTYPGKNVLIIDAGTCITYDLKTEDEVYLGGAISPGLEMRFKSLHKFTANLPLVTPKPAPKLIGDSTESSILSGIINGIEMELKGTIKSYDSKFEDLTIIFTGGDSQILSIPLKNSIFANSNFLLEGLNFILEFNKTQ.

6 to 13 (DGGNTFIK) lines the ATP pocket. Residues Y87 and 94–97 (GKDR) contribute to the substrate site. D96 acts as the Proton acceptor in catalysis. D117 is a binding site for K(+). Residue T120 participates in ATP binding. T172 provides a ligand contact to substrate.

It belongs to the type III pantothenate kinase family. Homodimer. NH4(+) serves as cofactor. K(+) is required as a cofactor.

Its subcellular location is the cytoplasm. The catalysed reaction is (R)-pantothenate + ATP = (R)-4'-phosphopantothenate + ADP + H(+). Its pathway is cofactor biosynthesis; coenzyme A biosynthesis; CoA from (R)-pantothenate: step 1/5. Its function is as follows. Catalyzes the phosphorylation of pantothenate (Pan), the first step in CoA biosynthesis. The sequence is that of Type III pantothenate kinase from Christiangramia forsetii (strain DSM 17595 / CGMCC 1.15422 / KT0803) (Gramella forsetii).